The primary structure comprises 149 residues: MLFRGRSHRSLDPKGRLMLPPDFRDILMSRAEGGKLVLTSFDDCVMGYPLPDWEDFERKFSTLKNPSRKMRDFRRLVIGSAELMELDGQGRVRISRSHMDYAGITKDVVLLGQGSRFEIWDQGRFDGIVTQDFDDVAAELADSGIELSL.

SpoVT-AbrB domains follow at residues R6 to D52 and A81 to R124.

Belongs to the MraZ family. Forms oligomers.

Its subcellular location is the cytoplasm. It is found in the nucleoid. The chain is Transcriptional regulator MraZ from Nitratidesulfovibrio vulgaris (strain DSM 19637 / Miyazaki F) (Desulfovibrio vulgaris).